The chain runs to 516 residues: Endoglucanase 17 (516 aa).

The N-terminal stretch at 1–29 (MALLLVSSSSSYALRVTIFLSFFFFLCNG) is a signal peptide. D105 functions as the Nucleophile in the catalytic mechanism. Catalysis depends on residues H433, D484, and E493.

Belongs to the glycosyl hydrolase 9 (cellulase E) family.

The protein localises to the secreted. It catalyses the reaction Endohydrolysis of (1-&gt;4)-beta-D-glucosidic linkages in cellulose, lichenin and cereal beta-D-glucans.. The protein is Endoglucanase 17 of Arabidopsis thaliana (Mouse-ear cress).